The chain runs to 305 residues: UDP-N-acetylenolpyruvoylglucosamine reductase (305 aa).

Residues 33–198 form the FAD-binding PCMH-type domain; that stretch reads RVGGPAQVLF…TGGTFRGRRA (166 aa). Arg178 is a catalytic residue. Catalysis depends on Ser227, which acts as the Proton donor. Residue Glu297 is part of the active site.

This sequence belongs to the MurB family. The cofactor is FAD.

The protein resides in the cytoplasm. It carries out the reaction UDP-N-acetyl-alpha-D-muramate + NADP(+) = UDP-N-acetyl-3-O-(1-carboxyvinyl)-alpha-D-glucosamine + NADPH + H(+). It participates in cell wall biogenesis; peptidoglycan biosynthesis. Functionally, cell wall formation. The chain is UDP-N-acetylenolpyruvoylglucosamine reductase from Nitrobacter hamburgensis (strain DSM 10229 / NCIMB 13809 / X14).